The sequence spans 240 residues: LexA repressor (240 aa).

The segment at residues 26-46 (FDEMKDALDLASKSGIHRLIT) is a DNA-binding region (H-T-H motif). A disordered region spans residues 78–113 (QPRRGFSPSVIEGSLGKPQPVQPPAPAKPANDENNS). Residues serine 160 and lysine 198 each act as for autocatalytic cleavage activity in the active site.

It belongs to the peptidase S24 family. As to quaternary structure, homodimer.

It carries out the reaction Hydrolysis of Ala-|-Gly bond in repressor LexA.. Represses a number of genes involved in the response to DNA damage (SOS response), including recA and lexA. In the presence of single-stranded DNA, RecA interacts with LexA causing an autocatalytic cleavage which disrupts the DNA-binding part of LexA, leading to derepression of the SOS regulon and eventually DNA repair. The polypeptide is LexA repressor (Rhizobium rhizogenes (strain K84 / ATCC BAA-868) (Agrobacterium radiobacter)).